Consider the following 156-residue polypeptide: MPRRRSVEPRKILPDPKFGSELLAKFINVLMVDGKKSTAESIIYGALETLAQRTGKEALEAFEAALENVRPTVEVKSRRVGGSTYQVPVEVRPSRRNALAMRWIVEAARKRGDKSMALRLANELSDAADNKGTAVKKREDVHRMAEANKAFAHFRW.

It belongs to the universal ribosomal protein uS7 family. In terms of assembly, part of the 30S ribosomal subunit. Contacts proteins S9 and S11.

Functionally, one of the primary rRNA binding proteins, it binds directly to 16S rRNA where it nucleates assembly of the head domain of the 30S subunit. Is located at the subunit interface close to the decoding center, probably blocks exit of the E-site tRNA. The protein is Small ribosomal subunit protein uS7 of Actinobacillus pleuropneumoniae serotype 5b (strain L20).